Consider the following 361-residue polypeptide: MPGCPCPGCGMAGQRLLFLTVLALELLERAGGSQPALRSLGAAAACRLDSKESESWGALLSGERLDTWICSLLGSLMVGLSGVFPLLVIPLEMGTMLQSEAGAWRLKQLLSFALGGLLGNVFLHLLPEAWAYTCNISPGVEGQSLQRQQQLGLWVIAGFLTFLALEKMFLNCKEEDPSQAPSKDPTAAALNGGHCLAQPAAEPGLRAVVRNLKVSGYLNLLANTIDNFTHGLAVAASFLVSKKIGLLTTMAILLHEIPHEVGDFAILLRAGFDRWTAAKLQFSTALGGLLGACFAICTQSPKGVEETVVWTLPFTSGGFLYVALVNVLPDLLEEDDPWHLNPPLPTGTPCSRCCCSAPVSW.

Residues 1–6 (MPGCPC) are Lumenal-facing. The chain crosses the membrane as a helical span at residues 7 to 27 (PGCGMAGQRLLFLTVLALELL). Over 28–68 (ERAGGSQPALRSLGAAAACRLDSKESESWGALLSGERLDTW) the chain is Cytoplasmic. A helical membrane pass occupies residues 69-89 (ICSLLGSLMVGLSGVFPLLVI). Topologically, residues 90-108 (PLEMGTMLQSEAGAWRLKQ) are lumenal. The chain crosses the membrane as a helical span at residues 109–129 (LLSFALGGLLGNVFLHLLPEA). Residues 130-150 (WAYTCNISPGVEGQSLQRQQQ) are Cytoplasmic-facing. The helical transmembrane segment at 151 to 171 (LGLWVIAGFLTFLALEKMFLN) threads the bilayer. The Lumenal portion of the chain corresponds to 172 to 233 (CKEEDPSQAP…TIDNFTHGLA (62 aa)). Residues 234–254 (VAASFLVSKKIGLLTTMAILL) form a helical membrane-spanning segment. An XEXPHE-motif motif is present at residues 255 to 260 (HEIPHE). Over 255–276 (HEIPHEVGDFAILLRAGFDRWT) the chain is Cytoplasmic. The chain crosses the membrane as a helical span at residues 277–297 (AAKLQFSTALGGLLGACFAIC). Topologically, residues 298-307 (TQSPKGVEET) are lumenal. Residues 308-328 (VVWTLPFTSGGFLYVALVNVL) traverse the membrane as a helical segment. Residues 329-340 (PDLLEEDDPWHL) are Cytoplasmic-facing. Residues 341-361 (NPPLPTGTPCSRCCCSAPVSW) form a helical membrane-spanning segment.

It belongs to the ZIP transporter (TC 2.A.5) family. In terms of assembly, homodimer.

The protein resides in the golgi apparatus membrane. It is found in the cytoplasmic vesicle membrane. Its subcellular location is the endoplasmic reticulum membrane. It catalyses the reaction Zn(2+)(in) = Zn(2+)(out). Functions as a zinc transporter transporting Zn(2+) from the Golgi apparatus to the cytosol and thus influences the zinc level at least in areas of the cytosol. May regulate beige adipocyte differentiation. This is Zinc transporter ZIP13 from Rattus norvegicus (Rat).